The chain runs to 236 residues: MAGSVDEEALHQLYLWVDNIPLSRPKRNLSRDFSDGVLVAEVIKFYFPKMVEMHNYVPANSLQQKLSNWSHLNRKVLNKLNFSVPEDVMRKIAQCAPGVVELVLIPLRQRLEERQRRRKQGIGSLQELAPQDGTDYMDVGLSQKARGEGVPDPQGRGQLREGRLPVPRPPGDSQALQSDPSFILQIAEKEQELLASQETVQVLQMKVRRLEHLLQLKNVRIEDLSRRLQQAERKQR.

The 106-residue stretch at 7–112 (EEALHQLYLW…VLIPLRQRLE (106 aa)) folds into the Calponin-homology (CH) domain. Residues 118 to 177 (RKQGIGSLQELAPQDGTDYMDVGLSQKARGEGVPDPQGRGQLREGRLPVPRPPGDSQALQ) form a disordered region. Positions 183-236 (ILQIAEKEQELLASQETVQVLQMKVRRLEHLLQLKNVRIEDLSRRLQQAERKQR) are essential for homodimerization and microtubule bundling activity.

As to quaternary structure, homodimer. Interacts with actin, TJP1, CGN and CDH1.

The protein resides in the cytoplasm. Its subcellular location is the cell projection. The protein localises to the cilium. It localises to the flagellum. It is found in the cytoskeleton. The protein resides in the cilium axoneme. Its subcellular location is the apical cell membrane. The protein localises to the basolateral cell membrane. It localises to the stress fiber. It is found in the microvillus. The protein resides in the lamellipodium. Its subcellular location is the filopodium. Its function is as follows. Microtubule-associated protein involved in the stabilization of microtubules along the axis of migration during radial intercalation. Promotes the establishment and stabilization of an axis of microtubules required for the active migration of cells into the outer epithelium. Microtubule-associated protein that promotes microtubule bundling and stabilizes microtubules against depolymerization in response to cold shock. Essential for ciliary central apparatus formation which requires both its microtubule-binding and bundling activities and for ciliary localization of HYDIN and SPAG6 in ependymal cilia. Binds actin in intestinal epithelial cells (IECs), essential for IECs survival and contributes to formation of filopodia and lamellipodia in migrating IECs. Regulates planar cell polarity signaling pathway and asymmetric microtubule accumulation in ciliated epithelia. This Bos taurus (Bovine) protein is Sperm flagellar protein 1 (SPEF1).